We begin with the raw amino-acid sequence, 493 residues long: Tripartite motif-containing protein 5 (493 aa).

An N-acetylalanine modification is found at Ala2. An RING-type zinc finger spans residues 15–59 (CPICLELLTQPLSLDCGHSFCQACLTANHEKSMLDKGESSCPVCR). Ser86 is subject to Phosphoserine. The B box-type zinc-finger motif lies at 90 to 132 (QKVDHCARHGEKLLLFCQEDGKVICWLCERSQEHRGHHTFLTE). Positions 95, 98, 117, and 123 each coordinate Zn(2+). A coiled-coil region spans residues 131 to 240 (TEEVAQECQV…LISDLEHRLQ (110 aa)). The interval 185 to 198 (FEQLRDILDWEESN) is required for interaction with GABARAP and for autophagy. A B30.2/SPRY domain is found at 281-493 (LKGMLEVFRE…VPMTLCSPSS (213 aa)).

It belongs to the TRIM/RBCC family. Can form homodimers and homotrimers. In addition to lower-order dimerization, also exhibits a higher-order multimerization and both low- and high-order multimerizations are essential for its restriction activity. Interacts with BTBD1 and BTBD2. Interacts with PSMC4, PSMC5, PSMD7 and HSPA8/HSC70. Interacts (via B30.2/SPRY domain) with HSPA1A/B. Interacts with PSMC2, MAP3K7/TAK1, TAB2 and TAB3. Interacts with SQSTM1. Interacts with TRIM6 and TRIM34. Interacts with ULK1 (phosphorylated form), GABARAP, GABARAPL1, GABARAPL2, MAP1LC3A, MAP1LC3C and BECN1. Post-translationally, degraded in a proteasome-independent fashion in the absence of viral infection but in a proteasome-dependent fashion following exposure to restriction sensitive virus. Autoubiquitinated in a RING finger- and UBE2D2-dependent manner. Monoubiquitinated by TRIM21. Deubiquitinated by Yersinia YopJ. Ubiquitination may not lead to proteasomal degradation.

Its subcellular location is the cytoplasm. It localises to the nucleus. The catalysed reaction is S-ubiquitinyl-[E2 ubiquitin-conjugating enzyme]-L-cysteine + [acceptor protein]-L-lysine = [E2 ubiquitin-conjugating enzyme]-L-cysteine + N(6)-ubiquitinyl-[acceptor protein]-L-lysine.. The protein operates within protein modification; protein ubiquitination. Functionally, capsid-specific restriction factor that prevents infection from non-host-adapted retroviruses. Blocks viral replication early in the life cycle, after viral entry but before reverse transcription. In addition to acting as a capsid-specific restriction factor, also acts as a pattern recognition receptor that activates innate immune signaling in response to the retroviral capsid lattice. Binding to the viral capsid triggers its E3 ubiquitin ligase activity, and in concert with the heterodimeric ubiquitin conjugating enzyme complex UBE2V1-UBE2N (also known as UBC13-UEV1A complex) generates 'Lys-63'-linked polyubiquitin chains, which in turn are catalysts in the autophosphorylation of the MAP3K7/TAK1 complex (includes TAK1, TAB2, and TAB3). Activation of the MAP3K7/TAK1 complex by autophosphorylation results in the induction and expression of NF-kappa-B and MAPK-responsive inflammatory genes, thereby leading to an innate immune response in the infected cell. Plays a role in regulating autophagy through activation of autophagy regulator BECN1 by causing its dissociation from its inhibitors BCL2 and TAB2. This Gorilla gorilla gorilla (Western lowland gorilla) protein is Tripartite motif-containing protein 5 (TRIM5).